Here is a 165-residue protein sequence, read N- to C-terminus: Small histone ubiquitination factor 1 (165 aa).

A compositionally biased stretch (basic and acidic residues) spans 1-17; the sequence is MSSRRNDYHYDGNDHQY. The tract at residues 1-86 is disordered; sequence MSSRRNDYHY…STRASFGAAS (86 aa). 2 stretches are compositionally biased toward low complexity: residues 29–38 and 50–60; these read SFYESSYRSR and SSYDSPSSSTN. Over residues 73-86 the composition is skewed to polar residues; sequence PSNNSTRASFGAAS.

As to quaternary structure, component of the histone H2B ubiquitin ligase complex (HULC) composed of at least brl1, brl2, rhp6 and shf1.

The protein localises to the nucleus. It is found in the cytoplasm. Its subcellular location is the cytoskeleton. The protein resides in the microtubule organizing center. It localises to the spindle pole body. Component of the histone H2B ubiquitin ligase complex (HULC) which plays a role in transcription regulation by catalyzing the monoubiquitination of histone H2B to form H2BK123ub1. H2BK123ub1 gives a specific tag for epigenetic transcriptional activation and is also a prerequisite for H3K4me and H3K79me formation. This is Small histone ubiquitination factor 1 (shf1) from Schizosaccharomyces pombe (strain 972 / ATCC 24843) (Fission yeast).